Here is a 101-residue protein sequence, read N- to C-terminus: Protein Tat (101 aa).

The span at 1 to 12 shows a compositional bias: basic and acidic residues; sequence MEPVDPRLEPWK. The disordered stretch occupies residues 1–24; that stretch reads MEPVDPRLEPWKHPGSQPKTASNN. The interaction with human CREBBP stretch occupies residues 1–24; that stretch reads MEPVDPRLEPWKHPGSQPKTASNN. Residues 1–48 are transactivation; sequence MEPVDPRLEPWKHPGSQPKTASNNCYCKRCCLHCQVCFTKKGLGISYG. The segment at 22-37 is cysteine-rich; it reads SNNCYCKRCCLHCQVC. Positions 25 and 27 each coordinate Zn(2+). Lys-28 bears the N6-acetyllysine; by host PCAF mark. Zn(2+) contacts are provided by Cys-30, His-33, Cys-34, and Cys-37. The core stretch occupies residues 38–48; sequence FTKKGLGISYG. The segment at 45 to 101 is disordered; it reads ISYGRKKRRQRRRAPQDSKTHQVSLSKQPASQPRGDPTGPKESKKKVERETETDPED. The segment covering 48–57 has biased composition (basic residues); that stretch reads GRKKRRQRRR. The Nuclear localization signal, RNA-binding (TAR), and protein transduction motif lies at 49 to 57; sequence RKKRRQRRR. The tract at residues 49-86 is interaction with the host capping enzyme RNGTT; the sequence is RKKRRQRRRAPQDSKTHQVSLSKQPASQPRGDPTGPKE. 2 positions are modified to N6-acetyllysine; by host EP300 and GCN5L2: Lys-50 and Lys-51. Arg-52 and Arg-53 each carry asymmetric dimethylarginine; by host PRMT6. Polar residues predominate over residues 65–75; the sequence is HQVSLSKQPAS. Lys-71 is covalently cross-linked (Glycyl lysine isopeptide (Lys-Gly) (interchain with G-Cter in ubiquitin)). The short motif at 78–80 is the Cell attachment site element; it reads RGD. Basic and acidic residues predominate over residues 83–101; that stretch reads GPKESKKKVERETETDPED.

The protein belongs to the lentiviruses Tat family. Interacts with host CCNT1. Associates with the P-TEFb complex composed at least of Tat, P-TEFb (CDK9 and CCNT1), TAR RNA, RNA Pol II. Recruits the HATs CREBBP, TAF1/TFIID, EP300, PCAF and GCN5L2. Interacts with host KAT5/Tip60; this interaction targets the latter to degradation. Interacts with the host deacetylase SIRT1. Interacts with host capping enzyme RNGTT; this interaction stimulates RNGTT. Binds to host KDR, and to the host integrins ITGAV/ITGB3 and ITGA5/ITGB1. Interacts with host KPNB1/importin beta-1 without previous binding to KPNA1/importin alpha-1. Interacts with EIF2AK2. Interacts with host nucleosome assembly protein NAP1L1; this interaction may be required for the transport of Tat within the nucleus, since the two proteins interact at the nuclear rim. Interacts with host C1QBP/SF2P32; this interaction involves lysine-acetylated Tat. Interacts with the host chemokine receptors CCR2, CCR3 and CXCR4. Interacts with host DPP4/CD26; this interaction may trigger an anti-proliferative effect. Interacts with host LDLR. Interacts with the host extracellular matrix metalloproteinase MMP1. Interacts with host PRMT6; this interaction mediates Tat's methylation. Interacts with, and is ubiquitinated by MDM2/Hdm2. Interacts with host PSMC3 and HTATIP2. Interacts with STAB1; this interaction may overcome SATB1-mediated repression of IL2 and IL2RA (interleukin) in T cells by binding to the same domain than HDAC1. Interacts (when acetylated) with human CDK13, thereby increasing HIV-1 mRNA splicing and promoting the production of the doubly spliced HIV-1 protein Nef. Interacts with host TBP; this interaction modulates the activity of transcriptional pre-initiation complex. Interacts with host RELA. Interacts with host PLSCR1; this interaction negatively regulates Tat transactivation activity by altering its subcellular distribution. Asymmetrical arginine methylation by host PRMT6 seems to diminish the transactivation capacity of Tat and affects the interaction with host CCNT1. In terms of processing, acetylation by EP300, CREBBP, GCN5L2/GCN5 and PCAF regulates the transactivation activity of Tat. EP300-mediated acetylation of Lys-50 promotes dissociation of Tat from the TAR RNA through the competitive binding to PCAF's bromodomain. In addition, the non-acetylated Tat's N-terminus can also interact with PCAF. PCAF-mediated acetylation of Lys-28 enhances Tat's binding to CCNT1. Lys-50 is deacetylated by SIRT1. Post-translationally, polyubiquitination by host MDM2 does not target Tat to degradation, but activates its transactivation function and fosters interaction with CCNT1 and TAR RNA. Phosphorylated by EIF2AK2 on serine and threonine residues adjacent to the basic region important for TAR RNA binding and function. Phosphorylation of Tat by EIF2AK2 is dependent on the prior activation of EIF2AK2 by dsRNA.

Its subcellular location is the host nucleus. It localises to the host nucleolus. The protein localises to the host cytoplasm. The protein resides in the secreted. Transcriptional activator that increases RNA Pol II processivity, thereby increasing the level of full-length viral transcripts. Recognizes a hairpin structure at the 5'-LTR of the nascent viral mRNAs referred to as the transactivation responsive RNA element (TAR) and recruits the cyclin T1-CDK9 complex (P-TEFb complex) that will in turn hyperphosphorylate the RNA polymerase II to allow efficient elongation. The CDK9 component of P-TEFb and other Tat-activated kinases hyperphosphorylate the C-terminus of RNA Pol II that becomes stabilized and much more processive. Other factors such as HTATSF1/Tat-SF1, SUPT5H/SPT5, and HTATIP2 are also important for Tat's function. Besides its effect on RNA Pol II processivity, Tat induces chromatin remodeling of proviral genes by recruiting the histone acetyltransferases (HATs) CREBBP, EP300 and PCAF to the chromatin. This also contributes to the increase in proviral transcription rate, especially when the provirus integrates in transcriptionally silent region of the host genome. To ensure maximal activation of the LTR, Tat mediates nuclear translocation of NF-kappa-B by interacting with host RELA. Through its interaction with host TBP, Tat may also modulate transcription initiation. Tat can reactivate a latently infected cell by penetrating in it and transactivating its LTR promoter. In the cytoplasm, Tat is thought to act as a translational activator of HIV-1 mRNAs. In terms of biological role, extracellular circulating Tat can be endocytosed by surrounding uninfected cells via the binding to several surface receptors such as CD26, CXCR4, heparan sulfate proteoglycans (HSPG) or LDLR. Neurons are rarely infected, but they internalize Tat via their LDLR. Through its interaction with nuclear HATs, Tat is potentially able to control the acetylation-dependent cellular gene expression. Modulates the expression of many cellular genes involved in cell survival, proliferation or in coding for cytokines or cytokine receptors. Tat plays a role in T-cell and neurons apoptosis. Tat induced neurotoxicity and apoptosis probably contribute to neuroAIDS. Circulating Tat also acts as a chemokine-like and/or growth factor-like molecule that binds to specific receptors on the surface of the cells, affecting many cellular pathways. In the vascular system, Tat binds to ITGAV/ITGB3 and ITGA5/ITGB1 integrins dimers at the surface of endothelial cells and competes with bFGF for heparin-binding sites, leading to an excess of soluble bFGF. The polypeptide is Protein Tat (Homo sapiens (Human)).